The sequence spans 571 residues: Fumarate reductase (cytochrome) (571 aa).

20 residues coordinate heme c: H8, C14, C17, H18, C36, C39, H40, H52, H58, H61, C68, C71, H72, A74, H75, C82, C85, H86, N91, and Y94. The flavoprotein-like stretch occupies residues 118-571 (ALASAPHDTV…EEAAKYSKKN (454 aa)). Residues A137, E156, N164, A165, A169, G170, G171, G278, and Q338 each coordinate FAD. G170 is a binding site for succinate. H365, T377, and E378 together coordinate succinate. 3 residues coordinate fumarate: T377, E378, and R402. R402 serves as the catalytic Proton donor. Heme c is bound at residue K431. H504 is a succinate binding site. H504 contributes to the fumarate binding site. FAD is bound by residues H505 and E534. 2 residues coordinate succinate: R544 and G547. Positions 544 and 547 each coordinate fumarate. A549 and I550 together coordinate FAD.

Monomer. The cofactor is FAD. It depends on heme c as a cofactor.

Its subcellular location is the periplasm. It carries out the reaction 2 Fe(III)-[cytochrome c] + succinate = fumarate + 2 Fe(II)-[cytochrome c] + 2 H(+). Its function is as follows. Flavocytochrome that catalyzes the reduction of fumarate to succinate. Is essential for fumarate respiration during anaerobic growth, acting as the terminal reductase. Receives electrons from the membrane-bound tetraheme c-type cytochrome CymA. In vitro, can use the artificial electron donor methyl viologen. This is Fumarate reductase (cytochrome) (fccA) from Shewanella frigidimarina.